Consider the following 445-residue polypeptide: GTPase Der (445 aa).

EngA-type G domains lie at 3–167 and 180–353; these read PVIA…YAGE and IKIA…AAAM. GTP is bound by residues 9–16, 56–60, 119–122, 186–193, 233–237, and 298–301; these read GRPNVGKS, DTGGF, NKAE, DTAGL, and NKWD. One can recognise a KH-like domain in the interval 354 to 438; it reads KKLPTPKLTR…PLRIEFRSST (85 aa).

Belongs to the TRAFAC class TrmE-Era-EngA-EngB-Septin-like GTPase superfamily. EngA (Der) GTPase family. Associates with the 50S ribosomal subunit.

In terms of biological role, GTPase that plays an essential role in the late steps of ribosome biogenesis. The polypeptide is GTPase Der (Burkholderia pseudomallei (strain 1106a)).